The primary structure comprises 206 residues: Imidazoleglycerol-phosphate dehydratase (206 aa).

Residues 1-24 form a disordered region; sequence MDPTASGRQAPRNPRQATVQRETK.

It belongs to the imidazoleglycerol-phosphate dehydratase family.

Its subcellular location is the cytoplasm. It carries out the reaction D-erythro-1-(imidazol-4-yl)glycerol 3-phosphate = 3-(imidazol-4-yl)-2-oxopropyl phosphate + H2O. It functions in the pathway amino-acid biosynthesis; L-histidine biosynthesis; L-histidine from 5-phospho-alpha-D-ribose 1-diphosphate: step 6/9. The polypeptide is Imidazoleglycerol-phosphate dehydratase (Acidothermus cellulolyticus (strain ATCC 43068 / DSM 8971 / 11B)).